Reading from the N-terminus, the 680-residue chain is Translation factor GUF1 homolog, chloroplastic (680 aa).

The transit peptide at 1 to 51 (MAAKINSLAALVSLQASHHHHXSTPFYFSPFSPHLSTTLTSRRRSLRSAVV) directs the protein to the chloroplast. The tr-type G domain occupies 83–264 (SNIRNFCIIA…AIVKRIPPPC (182 aa)). GTP-binding positions include 92-99 (AHIDHGKS), 157-161 (DTPGH), and 211-214 (NKID).

This sequence belongs to the TRAFAC class translation factor GTPase superfamily. Classic translation factor GTPase family. LepA subfamily.

It localises to the plastid. Its subcellular location is the chloroplast. The catalysed reaction is GTP + H2O = GDP + phosphate + H(+). Promotes chloroplast protein synthesis. May act as a fidelity factor of the translation reaction, by catalyzing a one-codon backward translocation of tRNAs on improperly translocated ribosomes. The chain is Translation factor GUF1 homolog, chloroplastic from Vitis vinifera (Grape).